Here is a 199-residue protein sequence, read N- to C-terminus: Transgelin-3 (199 aa).

The Calponin-homology (CH) domain occupies 24-136 (ADLENKLVDW…RTLMALGSVA (113 aa)). Position 163 is a phosphoserine (serine 163). A Calponin-like repeat occupies 174-199 (IGLQMGSNKGASQAGMTGYGMPRQIM). Positions 178–188 (MGSNKGASQAG) are enriched in polar residues. Residues 178–199 (MGSNKGASQAGMTGYGMPRQIM) are disordered.

This sequence belongs to the calponin family. Abundant and ubiquitous expression in neurons.

The chain is Transgelin-3 (Tagln3) from Rattus norvegicus (Rat).